A 347-amino-acid chain; its full sequence is GMP reductase (347 aa).

108–131 (ADFEKTKQILDLNPALNFVCIDVA) is a binding site for NADP(+). K(+)-binding residues include Gly181 and Gly183. Cys186 acts as the Thioimidate intermediate in catalysis. 216 to 239 (IVSDGGCTTPGDVAKAFGGGADFV) contacts NADP(+).

Belongs to the IMPDH/GMPR family. GuaC type 1 subfamily. In terms of assembly, homotetramer.

The enzyme catalyses IMP + NH4(+) + NADP(+) = GMP + NADPH + 2 H(+). Catalyzes the irreversible NADPH-dependent deamination of GMP to IMP. It functions in the conversion of nucleobase, nucleoside and nucleotide derivatives of G to A nucleotides, and in maintaining the intracellular balance of A and G nucleotides. The chain is GMP reductase from Escherichia coli O7:K1 (strain IAI39 / ExPEC).